Consider the following 101-residue polypeptide: Movement protein (101 aa).

Positions Met1 to Gly22 are disordered. Residues Glu30–Leu50 form a helical membrane-spanning segment. Residues Asn79–Gly101 are disordered. The span at Pro80–Asn92 shows a compositional bias: polar residues.

The protein belongs to the mastrevirus movement protein family. Interacts with the capsid protein (CP). Part of a MP-CP-viral DNA complex.

The protein localises to the host membrane. Functionally, involved in the viral transport within, and between cells. This chain is Movement protein, found in Avena sativa (Oat).